The following is a 1108-amino-acid chain: Topless-related protein 3 (1108 aa).

The LisH domain maps to 4 to 36 (LSRELVFLILQFLEEEKFKESVHRLEKESGFFF). Residues 34–92 (FFFNTKYFDEKVLAGEWDDVETYLSGFTKVDDNRYSMKIFFEIRKQKYLEALDRQEKAK) form the CTLH domain. S214 carries the post-translational modification Phosphoserine. 6 WD repeats span residues 343 to 383 (HQGS…RLVS), 405 to 444 (ETPI…DLRQ), 450 to 491 (AHVG…HFTF), 493 to 534 (GHDA…SRVD), 583 to 623 (EFQK…VLTS), and 628 to 667 (GGLP…RSLR). Residues 706–725 (HSQMLNGVDPSKSRIDDSTD) form a disordered region. Over residues 716-725 (SKSRIDDSTD) the composition is skewed to basic and acidic residues. WD repeat units follow at residues 751–790 (GSST…QNPS), 818–856 (NLEN…VMTT), 859–899 (PPPP…VKSK), 902–941 (GHQK…KRKS), and 994–1033 (SLSA…LRCR). The tract at residues 1084–1108 (GMIPPSEAINSPSTTSNQTPEQLQR) is disordered. Over residues 1091-1108 (AINSPSTTSNQTPEQLQR) the composition is skewed to polar residues.

Tetramer. Interacts with NINJA/AFPH2. Interacts with SMXL6. Interacts with SPL (via EAR motif). Interacts with SPEAR3/TIE1.

It localises to the nucleus. Transcriptional corepressor. Negative regulator of jasmonate responses. This Arabidopsis thaliana (Mouse-ear cress) protein is Topless-related protein 3 (TPR3).